A 185-amino-acid chain; its full sequence is Ribosome-recycling factor (185 aa).

Belongs to the RRF family.

The protein resides in the cytoplasm. In terms of biological role, responsible for the release of ribosomes from messenger RNA at the termination of protein biosynthesis. May increase the efficiency of translation by recycling ribosomes from one round of translation to another. In Wolbachia sp. subsp. Drosophila simulans (strain wRi), this protein is Ribosome-recycling factor.